The primary structure comprises 40 residues: Proteinase inhibitor IIB (40 aa).

3 disulfide bridges follow: C2–C16, C6–C28, and C12–C38.

Belongs to the protease inhibitor I20 (potato type II proteinase inhibitor) family.

It is found in the secreted. Its function is as follows. Inhibits chymotrypsin and subtilisin strongly. The polypeptide is Proteinase inhibitor IIB (Solanum tuberosum (Potato)).